A 249-amino-acid polypeptide reads, in one-letter code: 1-(5-phosphoribosyl)-5-[(5-phosphoribosylamino)methylideneamino] imidazole-4-carboxamide isomerase (249 aa).

D11 functions as the Proton acceptor in the catalytic mechanism. D133 (proton donor) is an active-site residue.

This sequence belongs to the HisA/HisF family.

The protein localises to the cytoplasm. It carries out the reaction 1-(5-phospho-beta-D-ribosyl)-5-[(5-phospho-beta-D-ribosylamino)methylideneamino]imidazole-4-carboxamide = 5-[(5-phospho-1-deoxy-D-ribulos-1-ylimino)methylamino]-1-(5-phospho-beta-D-ribosyl)imidazole-4-carboxamide. It functions in the pathway amino-acid biosynthesis; L-histidine biosynthesis; L-histidine from 5-phospho-alpha-D-ribose 1-diphosphate: step 4/9. The sequence is that of 1-(5-phosphoribosyl)-5-[(5-phosphoribosylamino)methylideneamino] imidazole-4-carboxamide isomerase from Haemophilus influenzae (strain 86-028NP).